We begin with the raw amino-acid sequence, 525 residues long: Biotinidase (525 aa).

Positions 1–26 are cleaved as a signal peptide; that stretch reads MSRAGRQLALLLCSCCVAVAIPGGLA. Residues 54–333 enclose the CN hydrolase domain; that stretch reads DPLALTSREQ…PGLISAGNAT (280 aa). Glu94 acts as the Proton acceptor in catalysis. 2 N-linked (GlcNAc...) asparagine glycosylation sites follow: Asn132 and Asn185. The Proton donor role is filled by Lys194. Cys227 functions as the Nucleophile in the catalytic mechanism. A glycan (N-linked (GlcNAc...) asparagine) is linked at Asn384.

It belongs to the carbon-nitrogen hydrolase superfamily. BTD/VNN family.

The protein localises to the secreted. It localises to the extracellular space. It carries out the reaction biocytin + H2O = biotin + L-lysine. The enzyme catalyses biotin amide + H2O = biotin + NH4(+). Catalytic release of biotin from biocytin, the product of biotin-dependent carboxylases degradation. This is Biotinidase (BTD) from Bos taurus (Bovine).